The primary structure comprises 273 residues: Dermonecrotic toxin LdSicTox-alphaIB3aiv (273 aa).

The active site involves H5. Mg(2+) contacts are provided by E25 and D27. The active-site Nucleophile is the H41. 2 cysteine pairs are disulfide-bonded: C45/C51 and C47/C190. Residue D85 coordinates Mg(2+).

It belongs to the arthropod phospholipase D family. Class II subfamily. It depends on Mg(2+) as a cofactor. In terms of tissue distribution, expressed by the venom gland.

The protein resides in the secreted. It carries out the reaction an N-(acyl)-sphingosylphosphocholine = an N-(acyl)-sphingosyl-1,3-cyclic phosphate + choline. It catalyses the reaction an N-(acyl)-sphingosylphosphoethanolamine = an N-(acyl)-sphingosyl-1,3-cyclic phosphate + ethanolamine. The enzyme catalyses a 1-acyl-sn-glycero-3-phosphocholine = a 1-acyl-sn-glycero-2,3-cyclic phosphate + choline. The catalysed reaction is a 1-acyl-sn-glycero-3-phosphoethanolamine = a 1-acyl-sn-glycero-2,3-cyclic phosphate + ethanolamine. Dermonecrotic toxins cleave the phosphodiester linkage between the phosphate and headgroup of certain phospholipids (sphingolipid and lysolipid substrates), forming an alcohol (often choline) and a cyclic phosphate. This toxin acts on sphingomyelin (SM). It may also act on ceramide phosphoethanolamine (CPE), lysophosphatidylcholine (LPC) and lysophosphatidylethanolamine (LPE), but not on lysophosphatidylserine (LPS), and lysophosphatidylglycerol (LPG). It acts by transphosphatidylation, releasing exclusively cyclic phosphate products as second products. Induces dermonecrosis, hemolysis, increased vascular permeability, edema, inflammatory response, and platelet aggregation. This chain is Dermonecrotic toxin LdSicTox-alphaIB3aiv, found in Loxosceles deserta (Desert recluse spider).